Reading from the N-terminus, the 156-residue chain is Calglandulin (156 aa).

EF-hand domains follow at residues 8–43, 44–79, 82–117, and 118–153; these read EQIT…IGIN, PTKR…YHEK, NQDE…AGEP, and LNEH…ESFK. The Ca(2+) site is built by Asp131, Asp133, Asp135, Thr137, and Glu142.

Belongs to the calmodulin family. Calglandulin subfamily. Expressed by the venom gland.

Its subcellular location is the cytoplasm. Its function is as follows. May be involved in the cellular control mechanism of the secretion of toxins from the gland into the venom. The polypeptide is Calglandulin (Hoplocephalus stephensii (Stephens's banded snake)).